We begin with the raw amino-acid sequence, 531 residues long: Muscarinic acetylcholine receptor M5 (531 aa).

The Extracellular segment spans residues 1–28 (MEGESYNESTVNGTPVNHQALERHGLWE). Residue Asn7 is glycosylated (N-linked (GlcNAc...) asparagine). The helical transmembrane segment at 29-52 (VITIAVVTAVVSLMTIVGNVLVMI) threads the bilayer. Residues 53 to 65 (SFKVNSQLKTVNN) are Cytoplasmic-facing. A helical membrane pass occupies residues 66–86 (YYLLSLACADLIIGIFSMNLY). Residues 87–103 (TTYILMGRWVLGSLACD) lie on the Extracellular side of the membrane. A disulfide bond links Cys102 and Cys182. The helical transmembrane segment at 104–125 (LWLALDYVASNASVMNLLVISF) threads the bilayer. Topologically, residues 126–145 (DRYFSITRPLTYRAKRTPKR) are cytoplasmic. The chain crosses the membrane as a helical span at residues 146–168 (AGIMIGLAWLVSFILWAPAILCW). Over 169–190 (QYLVGKRTVPPDECQIQFLSEP) the chain is Extracellular. Residues 191 to 213 (TITFGTAIAAFYIPVSVMTILYC) traverse the membrane as a helical segment. The Cytoplasmic portion of the chain corresponds to 214 to 442 (RIYRETEKRT…LVKERKAAQT (229 aa)). Disordered regions lie at residues 259–295 (SLAQ…DWEK) and 327–346 (EAKE…ETVV). Low complexity predominate over residues 267-287 (QASWSSSRRSTSTTGKTTQAT). Positions 334 to 346 (KESNTQETKETVV) are enriched in polar residues. A helical transmembrane segment spans residues 443-463 (LSAILLAFIITWTPYNIMVLV). Residues 464–477 (STFCDKCVPVTLWH) are Extracellular-facing. A helical transmembrane segment spans residues 478 to 497 (LGYWLCYVNSTINPICYALC). Residues 498 to 531 (NRTFRKTFKLLLLCRWKKKKVEEKLYWQGNSKLP) lie on the Cytoplasmic side of the membrane. A phosphothreonine mark is found at Thr500 and Thr504.

It belongs to the G-protein coupled receptor 1 family. Muscarinic acetylcholine receptor subfamily. CHRM5 sub-subfamily.

The protein localises to the cell membrane. It is found in the postsynaptic cell membrane. The muscarinic acetylcholine receptor mediates various cellular responses, including inhibition of adenylate cyclase, breakdown of phosphoinositides and modulation of potassium channels through the action of G proteins. Primary transducing effect is Pi turnover. This chain is Muscarinic acetylcholine receptor M5 (Chrm5), found in Rattus norvegicus (Rat).